We begin with the raw amino-acid sequence, 162 residues long: Nucleotide-binding protein Anae109_0095 (162 aa).

Belongs to the YajQ family.

In terms of biological role, nucleotide-binding protein. The polypeptide is Nucleotide-binding protein Anae109_0095 (Anaeromyxobacter sp. (strain Fw109-5)).